The following is a 247-amino-acid chain: Dihydroorotate dehydrogenase B (NAD(+)), electron transfer subunit (247 aa).

An FAD-binding FR-type domain is found at 2 to 96 (RWKMKARVLS…TGPHGNGFEI (95 aa)). Residues 49-52 (RPFS), 64-66 (LYQ), and 71-72 (GT) each bind FAD. [2Fe-2S] cluster is bound by residues C210, C215, C218, and C234.

Belongs to the PyrK family. In terms of assembly, heterotetramer of 2 PyrK and 2 PyrD type B subunits. The cofactor is [2Fe-2S] cluster. FAD is required as a cofactor.

It participates in pyrimidine metabolism; UMP biosynthesis via de novo pathway; orotate from (S)-dihydroorotate (NAD(+) route): step 1/1. In terms of biological role, responsible for channeling the electrons from the oxidation of dihydroorotate from the FMN redox center in the PyrD type B subunit to the ultimate electron acceptor NAD(+). In Caldanaerobacter subterraneus subsp. tengcongensis (strain DSM 15242 / JCM 11007 / NBRC 100824 / MB4) (Thermoanaerobacter tengcongensis), this protein is Dihydroorotate dehydrogenase B (NAD(+)), electron transfer subunit.